The chain runs to 122 residues: Large ribosomal subunit protein uL14 (122 aa).

The protein belongs to the universal ribosomal protein uL14 family. As to quaternary structure, part of the 50S ribosomal subunit. Forms a cluster with proteins L3 and L19. In the 70S ribosome, L14 and L19 interact and together make contacts with the 16S rRNA in bridges B5 and B8.

Its function is as follows. Binds to 23S rRNA. Forms part of two intersubunit bridges in the 70S ribosome. This is Large ribosomal subunit protein uL14 from Saccharopolyspora erythraea (strain ATCC 11635 / DSM 40517 / JCM 4748 / NBRC 13426 / NCIMB 8594 / NRRL 2338).